A 455-amino-acid chain; its full sequence is Probable glycine dehydrogenase (decarboxylating) subunit 1 (455 aa).

Belongs to the GcvP family. N-terminal subunit subfamily. As to quaternary structure, the glycine cleavage system is composed of four proteins: P, T, L and H. In this organism, the P 'protein' is a heterodimer of two subunits.

The catalysed reaction is N(6)-[(R)-lipoyl]-L-lysyl-[glycine-cleavage complex H protein] + glycine + H(+) = N(6)-[(R)-S(8)-aminomethyldihydrolipoyl]-L-lysyl-[glycine-cleavage complex H protein] + CO2. Functionally, the glycine cleavage system catalyzes the degradation of glycine. The P protein binds the alpha-amino group of glycine through its pyridoxal phosphate cofactor; CO(2) is released and the remaining methylamine moiety is then transferred to the lipoamide cofactor of the H protein. The sequence is that of Probable glycine dehydrogenase (decarboxylating) subunit 1 from Francisella tularensis subsp. holarctica (strain FTNF002-00 / FTA).